Here is a 406-residue protein sequence, read N- to C-terminus: Cysteine desulfurase (406 aa).

N6-(pyridoxal phosphate)lysine is present on Lys-226. Cys-364 acts as the Cysteine persulfide intermediate in catalysis.

It belongs to the class-V pyridoxal-phosphate-dependent aminotransferase family. Csd subfamily. Homodimer. Interacts with SufE and the SufBCD complex composed of SufB, SufC and SufD. The interaction with SufE is required to mediate the direct transfer of the sulfur atom from the S-sulfanylcysteine. Requires pyridoxal 5'-phosphate as cofactor.

It is found in the cytoplasm. It catalyses the reaction (sulfur carrier)-H + L-cysteine = (sulfur carrier)-SH + L-alanine. The catalysed reaction is L-selenocysteine + AH2 = hydrogenselenide + L-alanine + A + H(+). Its pathway is cofactor biosynthesis; iron-sulfur cluster biosynthesis. Its function is as follows. Cysteine desulfurases mobilize the sulfur from L-cysteine to yield L-alanine, an essential step in sulfur metabolism for biosynthesis of a variety of sulfur-containing biomolecules. Component of the suf operon, which is activated and required under specific conditions such as oxidative stress and iron limitation. Acts as a potent selenocysteine lyase in vitro, that mobilizes selenium from L-selenocysteine. Selenocysteine lyase activity is however unsure in vivo. The protein is Cysteine desulfurase of Escherichia coli O127:H6 (strain E2348/69 / EPEC).